Reading from the N-terminus, the 70-residue chain is DNA-directed RNA polymerase subunit epsilon (70 aa).

The protein belongs to the RNA polymerase subunit epsilon family. As to quaternary structure, RNAP is composed of a core of 2 alpha, a beta and a beta' subunit. The core is associated with a delta subunit, and at least one of epsilon or omega. When a sigma factor is associated with the core the holoenzyme is formed, which can initiate transcription.

The enzyme catalyses RNA(n) + a ribonucleoside 5'-triphosphate = RNA(n+1) + diphosphate. Functionally, a non-essential component of RNA polymerase (RNAP). This is DNA-directed RNA polymerase subunit epsilon from Bacillus cereus (strain Q1).